Consider the following 119-residue polypeptide: Holo-[acyl-carrier-protein] synthase (119 aa).

Mg(2+)-binding residues include Asp8 and Glu60.

The protein belongs to the P-Pant transferase superfamily. AcpS family. Mg(2+) is required as a cofactor.

It localises to the cytoplasm. The enzyme catalyses apo-[ACP] + CoA = holo-[ACP] + adenosine 3',5'-bisphosphate + H(+). Transfers the 4'-phosphopantetheine moiety from coenzyme A to a Ser of acyl-carrier-protein. In Mycoplasma pneumoniae (strain ATCC 29342 / M129 / Subtype 1) (Mycoplasmoides pneumoniae), this protein is Holo-[acyl-carrier-protein] synthase.